The sequence spans 82 residues: ATP synthase subunit c (82 aa).

A run of 2 helical transmembrane segments spans residues 7-27 and 57-77; these read AASV…PGIG and FAFM…LLFA.

It belongs to the ATPase C chain family. As to quaternary structure, F-type ATPases have 2 components, F(1) - the catalytic core - and F(0) - the membrane proton channel. F(1) has five subunits: alpha(3), beta(3), gamma(1), delta(1), epsilon(1). F(0) has four main subunits: a(1), b(1), b'(1) and c(10-14). The alpha and beta chains form an alternating ring which encloses part of the gamma chain. F(1) is attached to F(0) by a central stalk formed by the gamma and epsilon chains, while a peripheral stalk is formed by the delta, b and b' chains.

The protein localises to the cellular thylakoid membrane. Functionally, f(1)F(0) ATP synthase produces ATP from ADP in the presence of a proton or sodium gradient. F-type ATPases consist of two structural domains, F(1) containing the extramembraneous catalytic core and F(0) containing the membrane proton channel, linked together by a central stalk and a peripheral stalk. During catalysis, ATP synthesis in the catalytic domain of F(1) is coupled via a rotary mechanism of the central stalk subunits to proton translocation. Its function is as follows. Key component of the F(0) channel; it plays a direct role in translocation across the membrane. A homomeric c-ring of between 10-14 subunits forms the central stalk rotor element with the F(1) delta and epsilon subunits. This Prochlorococcus marinus (strain MIT 9303) protein is ATP synthase subunit c.